Here is a 316-residue protein sequence, read N- to C-terminus: Very-long-chain 3-oxooacyl-coA reductase let-767 (316 aa).

NADP(+) contacts are provided by residues 52-80 (ITGA…VSRT) and Asp-106. Residue Ser-189 coordinates substrate. The active-site Proton acceptor is the Tyr-202. Residue Lys-206 participates in NADP(+) binding.

It belongs to the short-chain dehydrogenases/reductases (SDR) family. 17-beta-HSD 3 subfamily.

The catalysed reaction is a very-long-chain (3R)-3-hydroxyacyl-CoA + NADP(+) = a very-long-chain 3-oxoacyl-CoA + NADPH + H(+). Its pathway is lipid metabolism; fatty acid biosynthesis. Its function is as follows. Required for branched chain fatty acid synthesis. Catalyzes the reduction of the 3-ketoacyl-CoA intermediate that is formed in each cycle of fatty acid elongation. Very long-chain fatty acids (VLCFAs) serve as precursors for ceramide and sphingolipids. May also be required for sterol hormone production. This is Very-long-chain 3-oxooacyl-coA reductase let-767 from Caenorhabditis briggsae.